Reading from the N-terminus, the 324-residue chain is Acetyl-coenzyme A carboxylase carboxyl transferase subunit alpha (324 aa).

Residues 42–296 (RLSELEEEVY…EKALTRLAEK (255 aa)) form the CoA carboxyltransferase C-terminal domain.

This sequence belongs to the AccA family. As to quaternary structure, acetyl-CoA carboxylase is a heterohexamer composed of biotin carboxyl carrier protein (AccB), biotin carboxylase (AccC) and two subunits each of ACCase subunit alpha (AccA) and ACCase subunit beta (AccD).

The protein resides in the cytoplasm. It carries out the reaction N(6)-carboxybiotinyl-L-lysyl-[protein] + acetyl-CoA = N(6)-biotinyl-L-lysyl-[protein] + malonyl-CoA. Its pathway is lipid metabolism; malonyl-CoA biosynthesis; malonyl-CoA from acetyl-CoA: step 1/1. Component of the acetyl coenzyme A carboxylase (ACC) complex. First, biotin carboxylase catalyzes the carboxylation of biotin on its carrier protein (BCCP) and then the CO(2) group is transferred by the carboxyltransferase to acetyl-CoA to form malonyl-CoA. This is Acetyl-coenzyme A carboxylase carboxyl transferase subunit alpha from Shouchella clausii (strain KSM-K16) (Alkalihalobacillus clausii).